A 594-amino-acid polypeptide reads, in one-letter code: NADH-ubiquinone oxidoreductase chain 5 (594 aa).

15 helical membrane-spanning segments follow: residues 1–21 (MNLF…PIMM), 43–63 (AFLI…EMII), 87–107 (IVFA…SMWY), 114–134 (INQF…LVTA), 137–157 (LFQL…LIGW), 171–191 (AILY…WFLS), 211–233 (LPLM…HPWL), 241–261 (TPVS…FLLI), 272–292 (LMQT…AMCA), 301–320 (IIAF…IGIN), 325–347 (AFLH…GSII), 366–386 (MPFT…VPFL), 409–429 (LLIT…IIFF), 457–477 (LMAG…PMTT), and 486–506 (LKMT…EITL).

It belongs to the complex I subunit 5 family. Core subunit of respiratory chain NADH dehydrogenase (Complex I) which is composed of 45 different subunits.

It localises to the mitochondrion inner membrane. It carries out the reaction a ubiquinone + NADH + 5 H(+)(in) = a ubiquinol + NAD(+) + 4 H(+)(out). Functionally, core subunit of the mitochondrial membrane respiratory chain NADH dehydrogenase (Complex I) which catalyzes electron transfer from NADH through the respiratory chain, using ubiquinone as an electron acceptor. Essential for the catalytic activity and assembly of complex I. The chain is NADH-ubiquinone oxidoreductase chain 5 (MT-ND5) from Hippopotamus amphibius (Hippopotamus).